The sequence spans 623 residues: Chaperone protein HtpG (623 aa).

Residues 1–336 (MVSKQQTMGF…ASDLPLNISR (336 aa)) form an a; substrate-binding region. Positions 337–550 (EILQDNKQVE…EQDMGLEMQR (214 aa)) are b. The interval 551 to 623 (ILQAAGQQVP…NRVNRLLVSS (73 aa)) is c.

This sequence belongs to the heat shock protein 90 family. In terms of assembly, homodimer.

It localises to the cytoplasm. In terms of biological role, molecular chaperone. Has ATPase activity. In Legionella pneumophila subsp. pneumophila (strain Philadelphia 1 / ATCC 33152 / DSM 7513), this protein is Chaperone protein HtpG.